We begin with the raw amino-acid sequence, 209 residues long: Ribosomal RNA small subunit methyltransferase G (209 aa).

Residues Gly77, Met82, 128–129, and Arg143 contribute to the S-adenosyl-L-methionine site; that span reads VE.

It belongs to the methyltransferase superfamily. RNA methyltransferase RsmG family.

It is found in the cytoplasm. It catalyses the reaction guanosine(527) in 16S rRNA + S-adenosyl-L-methionine = N(7)-methylguanosine(527) in 16S rRNA + S-adenosyl-L-homocysteine. Its function is as follows. Specifically methylates the N7 position of guanine in position 527 of 16S rRNA. This chain is Ribosomal RNA small subunit methyltransferase G, found in Chromobacterium violaceum (strain ATCC 12472 / DSM 30191 / JCM 1249 / CCUG 213 / NBRC 12614 / NCIMB 9131 / NCTC 9757 / MK).